The chain runs to 786 residues: Ribosome biogenesis protein BOP1 homolog (786 aa).

Residues 1-11 (MAKKSAIKRKV) show a composition bias toward basic residues. The tract at residues 1-161 (MAKKSAIKRK…NSDTSDEEDI (161 aa)) is disordered. Polar residues predominate over residues 17–26 (INEQASVSEQ). 3 stretches are compositionally biased toward acidic residues: residues 44–53 (EDTTDDEGID), 60–72 (TSDD…DEEG), and 82–114 (SGED…DDAK). Over residues 122 to 135 (KATLSKTTGDSSNI) the composition is skewed to polar residues. Basic and acidic residues predominate over residues 141–150 (PRRDPSKPEY). Residues 151-160 (ENSDTSDEED) are compositionally biased toward acidic residues. WD repeat units follow at residues 447–488 (GHTD…RTIE), 490–528 (NDVV…KLLV), 572–614 (THFK…SQIP), 617–655 (KSKG…LIKK), 658–697 (TNSK…KPYQ), 701–740 (LHRN…DLLQ), and 756–786 (RDEF…RLYT).

It belongs to the WD repeat BOP1/ERB1 family.

Its subcellular location is the nucleus. It localises to the nucleolus. It is found in the nucleoplasm. In terms of biological role, required for maturation of ribosomal RNAs and formation of the large ribosomal subunit. The chain is Ribosome biogenesis protein BOP1 homolog from Drosophila grimshawi (Hawaiian fruit fly).